Consider the following 184-residue polypeptide: Large ribosomal subunit protein uL5c (184 aa).

It belongs to the universal ribosomal protein uL5 family. In terms of assembly, part of the 50S ribosomal subunit; contacts the 5S rRNA.

It is found in the plastid. It localises to the chloroplast. Functionally, binds 5S rRNA, forms part of the central protuberance of the 50S subunit. This Zygnema circumcarinatum (Green alga) protein is Large ribosomal subunit protein uL5c (rpl5).